The primary structure comprises 354 residues: NADH-quinone oxidoreductase subunit H (354 aa).

8 helical membrane-spanning segments follow: residues 25–45 (LVRI…LILW), 91–111 (WIYL…WAVI), 126–146 (LLYA…AGWA), 170–190 (MGFA…SGIV), 205–225 (FLSW…ISGI), 267–287 (IVIS…PFGF), 290–310 (FVPG…VFIW), and 330–350 (IFIP…MSPL).

The protein belongs to the complex I subunit 1 family. NDH-1 is composed of 14 different subunits. Subunits NuoA, H, J, K, L, M, N constitute the membrane sector of the complex.

The protein resides in the cell inner membrane. The enzyme catalyses a quinone + NADH + 5 H(+)(in) = a quinol + NAD(+) + 4 H(+)(out). NDH-1 shuttles electrons from NADH, via FMN and iron-sulfur (Fe-S) centers, to quinones in the respiratory chain. The immediate electron acceptor for the enzyme in this species is believed to be ubiquinone. Couples the redox reaction to proton translocation (for every two electrons transferred, four hydrogen ions are translocated across the cytoplasmic membrane), and thus conserves the redox energy in a proton gradient. This subunit may bind ubiquinone. The sequence is that of NADH-quinone oxidoreductase subunit H from Paraburkholderia phytofirmans (strain DSM 17436 / LMG 22146 / PsJN) (Burkholderia phytofirmans).